The chain runs to 425 residues: Serine hydroxymethyltransferase (425 aa).

(6S)-5,6,7,8-tetrahydrofolate is bound by residues Leu125 and Gly129–Leu131. Lys234 bears the N6-(pyridoxal phosphate)lysine mark.

It belongs to the SHMT family. Homodimer. The cofactor is pyridoxal 5'-phosphate.

The protein resides in the cytoplasm. It carries out the reaction (6R)-5,10-methylene-5,6,7,8-tetrahydrofolate + glycine + H2O = (6S)-5,6,7,8-tetrahydrofolate + L-serine. It functions in the pathway one-carbon metabolism; tetrahydrofolate interconversion. The protein operates within amino-acid biosynthesis; glycine biosynthesis; glycine from L-serine: step 1/1. Functionally, catalyzes the reversible interconversion of serine and glycine with tetrahydrofolate (THF) serving as the one-carbon carrier. This reaction serves as the major source of one-carbon groups required for the biosynthesis of purines, thymidylate, methionine, and other important biomolecules. Also exhibits THF-independent aldolase activity toward beta-hydroxyamino acids, producing glycine and aldehydes, via a retro-aldol mechanism. This is Serine hydroxymethyltransferase from Marinomonas sp. (strain MWYL1).